We begin with the raw amino-acid sequence, 345 residues long: Ubiquinone biosynthesis O-methyltransferase, mitochondrial (345 aa).

The N-terminal 86 residues, 1–86 (MWRGGRLSSR…TYRSSWKKLY (86 aa)), are a transit peptide targeting the mitochondrion. R124 serves as a coordination point for S-adenosyl-L-methionine. An N6-acetyllysine mark is found at K143 and K149. S-adenosyl-L-methionine is bound by residues G154 and D175. K196 bears the N6-acetyllysine mark. Position 222 (S222) interacts with S-adenosyl-L-methionine. E223, E226, and H227 together coordinate Mg(2+).

Belongs to the class I-like SAM-binding methyltransferase superfamily. UbiG/COQ3 family. Component of a multi-subunit COQ enzyme complex, composed of at least COQ3, COQ4, COQ5, COQ6, COQ7 and COQ9. It depends on Mg(2+) as a cofactor.

It localises to the mitochondrion inner membrane. The catalysed reaction is 3,4-dihydroxy-5-(all-trans-decaprenyl)benzoate + S-adenosyl-L-methionine = 4-hydroxy-3-methoxy-5-(all-trans-decaprenyl)benzoate + S-adenosyl-L-homocysteine + H(+). It catalyses the reaction a 3-demethylubiquinone + S-adenosyl-L-methionine = a ubiquinone + S-adenosyl-L-homocysteine. The enzyme catalyses 3-demethylubiquinol-10 + S-adenosyl-L-methionine = ubiquinol-10 + S-adenosyl-L-homocysteine + H(+). It functions in the pathway cofactor biosynthesis; ubiquinone biosynthesis. O-methyltransferase required for two non-consecutive steps during ubiquinone biosynthesis. Catalyzes the 2 O-methylation of 3,4-dihydroxy-5-(all-trans-decaprenyl)benzoic acid into 4-hydroxy-3-methoxy-5-(all-trans-decaprenyl)benzoic acid. Also catalyzes the last step of ubiquinone biosynthesis by mediating methylation of 3-demethylubiquinone into ubiquinone. Also able to mediate the methylation of 3-demethylubiquinol-10 into ubiquinol-10. This is Ubiquinone biosynthesis O-methyltransferase, mitochondrial from Rattus norvegicus (Rat).